Reading from the N-terminus, the 333-residue chain is MSAETPPCQLLERQSEAYRDWLWVAPPHDAWLHTVGGSVWSADATICQAWRARGRPVHADLAPTLTAPVPGAVLFWPKTHALGEWWLLALCAALPEGTPLQVVGEHQGGVKRVLKSLAALGLGCRKVDSARRCTLYATRTARLALSPEAAWTRFEAAGLTLESHPGVFGHGKLDDGTRQLLEVLPTALGDPAGQRVLDVGCGDGILGAWLGVRGAQVAAVDLDAFAVAATRRTFQANGVAGEAWQSDVFGDVSGSYDAIVSNPPFHQQRAIDYGPAERLIREAPARLVPGGRLVLVANAFLPYPRWLEDAFGEFTVLADDRRFRVYQAVKTRR.

Belongs to the methyltransferase superfamily. RsmC family. In terms of assembly, monomer.

The protein localises to the cytoplasm. The enzyme catalyses guanosine(1207) in 16S rRNA + S-adenosyl-L-methionine = N(2)-methylguanosine(1207) in 16S rRNA + S-adenosyl-L-homocysteine + H(+). Functionally, specifically methylates the guanine in position 1207 of 16S rRNA in the 30S particle. In Chromohalobacter salexigens (strain ATCC BAA-138 / DSM 3043 / CIP 106854 / NCIMB 13768 / 1H11), this protein is Ribosomal RNA small subunit methyltransferase C.